The primary structure comprises 577 residues: MNIQALINDKVSQALEAAGAPTGSPAAVRQSAKPQFGDYQANGVMGVAKQLGTNPREFAQKVLDVLDLDGIASKTEIAGPGFINIFLSEEFLAKQAEAALADPRLGVASEEAQTIVADYSAPNVAKEMHVGHLRSTIIGDAVVRTLEFLGHKVIRANHIGDWGTQFGMLIANLERVQQESGEVSMELADLEGFYRESKKLYDEDEEFAVKARGYVVKLQSGDEFCAEMWKKLVDVTMIQNQRNYDRLNVSLSRDDVMGESMYNDMLPKIVADLKAQGLAVEDDGAQVVFLEEFKNKDGEPMGVIVQKRDGGFLYTTTDIACAKYRYEELGADRVLYFIDSRQHQHLMQAWTIVRKAGYVPESVSLEHHAFGMMLGKDGKPFKTRAGGTVRLADLLDEAEVRAAQLIESKNPELAEDEKKAIANTVAMAAVKYADLSKHRTTDYVFDWDNMLAFEGNTAPYMQYAYTRVASVFAKAGVSMDDLQGEIKITDEKEKALIAKLMQFEEAVQSVAREGQPHIMCSYLFELAGQFSSFYEACPILVAEDEAVKQSRLKLAALTAKTIKQGLSLLGIDTLERM.

Residues 122–132 carry the 'HIGH' region motif; the sequence is PNVAKEMHVGH.

It belongs to the class-I aminoacyl-tRNA synthetase family. As to quaternary structure, monomer.

It is found in the cytoplasm. It catalyses the reaction tRNA(Arg) + L-arginine + ATP = L-arginyl-tRNA(Arg) + AMP + diphosphate. The sequence is that of Arginine--tRNA ligase from Vibrio vulnificus (strain YJ016).